Consider the following 545-residue polypeptide: Membrane protein insertase YidC (545 aa).

Residues 6–26 form a helical membrane-spanning segment; sequence NILLIGLLFVSFLLWQQWQAD. A disordered region spans residues 44 to 65; the sequence is STVADAHSSDVPDADSAVPEAT. 4 helical membrane passes run 346-366, 424-444, 461-481, and 504-524; these read LLMF…LITL, GGCL…WVLL, LSVQ…MFVM, and VIFT…WLVG.

This sequence belongs to the OXA1/ALB3/YidC family. Type 1 subfamily. Interacts with the Sec translocase complex via SecD. Specifically interacts with transmembrane segments of nascent integral membrane proteins during membrane integration.

The protein resides in the cell inner membrane. In terms of biological role, required for the insertion and/or proper folding and/or complex formation of integral membrane proteins into the membrane. Involved in integration of membrane proteins that insert both dependently and independently of the Sec translocase complex, as well as at least some lipoproteins. Aids folding of multispanning membrane proteins. The protein is Membrane protein insertase YidC of Shewanella pealeana (strain ATCC 700345 / ANG-SQ1).